A 366-amino-acid polypeptide reads, in one-letter code: Protein-methionine-sulfoxide reductase catalytic subunit MsrP (366 aa).

The span at 1–22 (MHNTFTHTKNNTHTKNNTQAKN) shows a compositional bias: low complexity. Residues 1–40 (MHNTFTHTKNNTHTKNNTQAKNSGSQTKSNAVSLNKPRKL) are disordered. Residues 1–76 (MHNTFTHTKN…TLALPASAQA (76 aa)) constitute a signal peptide (tat-type signal). Over residues 23–33 (SGSQTKSNAVS) the composition is skewed to polar residues. Mo-molybdopterin-binding positions include asparagine 120, 123 to 124 (YE), cysteine 178, threonine 213, asparagine 265, arginine 270, and 281 to 283 (SIK).

The protein belongs to the MsrP family. As to quaternary structure, heterodimer of a catalytic subunit (MsrP) and a heme-binding subunit (MsrQ). Mo-molybdopterin serves as cofactor. Post-translationally, predicted to be exported by the Tat system. The position of the signal peptide cleavage has not been experimentally proven.

Its subcellular location is the periplasm. The enzyme catalyses L-methionyl-[protein] + a quinone + H2O = L-methionyl-(S)-S-oxide-[protein] + a quinol. It catalyses the reaction L-methionyl-[protein] + a quinone + H2O = L-methionyl-(R)-S-oxide-[protein] + a quinol. Part of the MsrPQ system that repairs oxidized periplasmic proteins containing methionine sulfoxide residues (Met-O), using respiratory chain electrons. Thus protects these proteins from oxidative-stress damage caused by reactive species of oxygen and chlorine generated by the host defense mechanisms. MsrPQ is essential for the maintenance of envelope integrity under bleach stress, rescuing a wide series of structurally unrelated periplasmic proteins from methionine oxidation. The catalytic subunit MsrP is non-stereospecific, being able to reduce both (R-) and (S-) diastereoisomers of methionine sulfoxide. This Yersinia pestis protein is Protein-methionine-sulfoxide reductase catalytic subunit MsrP.